The primary structure comprises 86 residues: Large ribosomal subunit protein bL27c (86 aa).

The segment at 1-20 (MAHKKGSGSTRNGRDSNAQR) is disordered. The segment covering 7–19 (SGSTRNGRDSNAQ) has biased composition (polar residues).

Belongs to the bacterial ribosomal protein bL27 family.

The protein resides in the plastid. The protein localises to the chloroplast. The protein is Large ribosomal subunit protein bL27c (rpl27) of Guillardia theta (Cryptophyte).